A 267-amino-acid polypeptide reads, in one-letter code: 3-methyl-2-oxobutanoate hydroxymethyltransferase (267 aa).

Mg(2+) is bound by residues Asp-45 and Asp-84. Residues 45–46, Asp-84, and Lys-113 each bind 3-methyl-2-oxobutanoate; that span reads DS. A Mg(2+)-binding site is contributed by Glu-115. Glu-182 (proton acceptor) is an active-site residue.

It belongs to the PanB family. In terms of assembly, homodecamer; pentamer of dimers. Mg(2+) is required as a cofactor.

It is found in the cytoplasm. It carries out the reaction 3-methyl-2-oxobutanoate + (6R)-5,10-methylene-5,6,7,8-tetrahydrofolate + H2O = 2-dehydropantoate + (6S)-5,6,7,8-tetrahydrofolate. Its pathway is cofactor biosynthesis; coenzyme A biosynthesis. Functionally, catalyzes the reversible reaction in which hydroxymethyl group from 5,10-methylenetetrahydrofolate is transferred onto alpha-ketoisovalerate to form ketopantoate. This is 3-methyl-2-oxobutanoate hydroxymethyltransferase from Saccharolobus islandicus (strain M.16.27) (Sulfolobus islandicus).